Reading from the N-terminus, the 239-residue chain is 2-C-methyl-D-erythritol 4-phosphate cytidylyltransferase (239 aa).

It belongs to the IspD/TarI cytidylyltransferase family. IspD subfamily.

It catalyses the reaction 2-C-methyl-D-erythritol 4-phosphate + CTP + H(+) = 4-CDP-2-C-methyl-D-erythritol + diphosphate. It participates in isoprenoid biosynthesis; isopentenyl diphosphate biosynthesis via DXP pathway; isopentenyl diphosphate from 1-deoxy-D-xylulose 5-phosphate: step 2/6. Catalyzes the formation of 4-diphosphocytidyl-2-C-methyl-D-erythritol from CTP and 2-C-methyl-D-erythritol 4-phosphate (MEP). The protein is 2-C-methyl-D-erythritol 4-phosphate cytidylyltransferase of Acidobacterium capsulatum (strain ATCC 51196 / DSM 11244 / BCRC 80197 / JCM 7670 / NBRC 15755 / NCIMB 13165 / 161).